The sequence spans 788 residues: Ribonucleoside-diphosphate reductase subunit alpha (788 aa).

One can recognise an ATP-cone domain in the interval 2–92 (ITVVKRNGRI…LYDLYHKVSG (91 aa)). ATP is bound by residues Lys-6, 12-18 (EPLDITK), and Thr-52. Thr-200 serves as a coordination point for GDP. An intrachain disulfide couples Cys-216 to Cys-497. Residues 223-225 (DNI) and Arg-253 each bind dTTP. Asn-424 contributes to the GDP binding site. Asn-424 serves as the catalytic Proton acceptor. Cys-426 acts as the Cysteine radical intermediate in catalysis. GDP is bound by residues Glu-428 and 661 to 663 (SSI). Glu-428 acts as the Proton acceptor in catalysis.

This sequence belongs to the ribonucleoside diphosphate reductase large chain family. In terms of assembly, tetramer of two alpha and two beta subunits.

It carries out the reaction a 2'-deoxyribonucleoside 5'-diphosphate + [thioredoxin]-disulfide + H2O = a ribonucleoside 5'-diphosphate + [thioredoxin]-dithiol. With respect to regulation, under complex allosteric control mediated by deoxynucleoside triphosphates and ATP binding to separate specificity and activation sites on the alpha subunit. The type of nucleotide bound at the specificity site determines substrate preference. It seems probable that ATP makes the enzyme reduce CDP and UDP, dGTP favors ADP reduction and dTTP favors GDP reduction. Stimulated by ATP and inhibited by dATP binding to the activity site. Functionally, provides the precursors necessary for DNA synthesis. Catalyzes the biosynthesis of deoxyribonucleotides from the corresponding ribonucleotides. The chain is Ribonucleoside-diphosphate reductase subunit alpha (nrdA) from Helicobacter pylori (strain ATCC 700392 / 26695) (Campylobacter pylori).